A 1794-amino-acid polypeptide reads, in one-letter code: Protein TIC 214 (1794 aa).

A run of 6 helical transmembrane segments spans residues 19–39 (IINSVVVVGLYYGFLTTFSIG), 68–88 (FIAGQLMMFISIYYAPLHLAL), 91–111 (PHTITVLALPYLLFHFFWNNH), 133–153 (VFLNNLIFQLFNHFILPSSML), 176–196 (VGWLIGHILFMKWVGLVLVWI), and 227–247 (IFSILLFITCVYYLGRIPSPI).

Belongs to the TIC214 family. Part of the Tic complex.

It localises to the plastid. It is found in the chloroplast inner membrane. Its function is as follows. Involved in protein precursor import into chloroplasts. May be part of an intermediate translocation complex acting as a protein-conducting channel at the inner envelope. This Olimarabidopsis pumila (Dwarf rocket) protein is Protein TIC 214.